We begin with the raw amino-acid sequence, 953 residues long: E3 ubiquitin-protein ligase ZNF598 (953 aa).

A compositionally biased stretch (basic residues) spans 25–39; the sequence is KPSKSTRIKPTKPHH. Positions 25–47 are disordered; the sequence is KPSKSTRIKPTKPHHTPSNSMES. The RING-type zinc-finger motif lies at 57-97; the sequence is CVLCCQDIDLFAVGKCDHPVCYRCSTKMRVLCEQKYCAVCR. Residues 215 to 238 form a C2H2-type zinc finger; that stretch reads PLCKFCDDRYLDNDELLKHLRRDH. 2 disordered regions span residues 299 to 779 and 884 to 911; these read SKNR…EDSS and EKQQ…SSLD. Low complexity predominate over residues 371–380; it reads AAAMRASMAS. Positions 381-409 are enriched in basic and acidic residues; that stretch reads HQEERSHAQERSMLKPRREEKLEPDETRN. 2 stretches are compositionally biased toward polar residues: residues 410-431 and 467-483; these read NRST…NGSL and LSGS…YTNQ. S489 carries the phosphoserine modification. Low complexity-rich tracts occupy residues 508 to 518 and 536 to 553; these read QSSAASAWSQA and MTPM…PLPS. 2 stretches are compositionally biased toward polar residues: residues 555 to 564 and 641 to 650; these read SVPQPLTASS and LGSPSHTPET. Residues 655–666 show a composition bias toward basic and acidic residues; sequence AHKENVPEKKPP. Polar residues predominate over residues 695–711; that stretch reads SCTSFPENITSSKQPVT. Over residues 747 to 765 the composition is skewed to pro residues; sequence LPPPPPPGLGPAVSKPPPG. Polar residues predominate over residues 770–779; it reads PLNSNVEDSS.

Belongs to the ZNF598/HEL2 family.

The protein resides in the cytoplasm. It localises to the cytosol. The catalysed reaction is S-ubiquitinyl-[E2 ubiquitin-conjugating enzyme]-L-cysteine + [acceptor protein]-L-lysine = [E2 ubiquitin-conjugating enzyme]-L-cysteine + N(6)-ubiquitinyl-[acceptor protein]-L-lysine.. Its pathway is protein modification; protein ubiquitination. Its function is as follows. E3 ubiquitin-protein ligase that plays a key role in the ribosome quality control (RQC), a pathway that takes place when a ribosome has stalled during translation, leading to degradation of nascent peptide chains. ZNF598 is activated when ribosomes are stalled within an mRNA following translation of prematurely polyadenylated mRNAs. Acts as a ribosome collision sensor: specifically recognizes and binds collided di-ribosome, which arises when a trailing ribosome encounters a slower leading ribosome, leading to terminally arrest translation. Following binding to colliding ribosomes, mediates monoubiquitination of 40S ribosomal proteins RPS10/eS10 and RPS3/uS3, and 'Lys-63'-linked polyubiquitination of RPS20/uS10. Polyubiquitination of RPS20/uS10 promotes recruitment of the RQT (ribosome quality control trigger) complex, which drives the disassembly of stalled ribosomes, followed by degradation of nascent peptides. This is E3 ubiquitin-protein ligase ZNF598 from Danio rerio (Zebrafish).